We begin with the raw amino-acid sequence, 430 residues long: 3-phosphoshikimate 1-carboxyvinyltransferase (430 aa).

The 3-phosphoshikimate site is built by Lys21, Ser22, and Arg26. Lys21 is a binding site for phosphoenolpyruvate. Phosphoenolpyruvate-binding residues include Gly94 and Arg122. 3-phosphoshikimate contacts are provided by Ser168, Gln170, Asp315, and Lys342. Gln170 is a binding site for phosphoenolpyruvate. The active-site Proton acceptor is Asp315. Phosphoenolpyruvate-binding residues include Arg346 and Arg389.

Belongs to the EPSP synthase family. In terms of assembly, monomer.

It localises to the cytoplasm. It catalyses the reaction 3-phosphoshikimate + phosphoenolpyruvate = 5-O-(1-carboxyvinyl)-3-phosphoshikimate + phosphate. Its pathway is metabolic intermediate biosynthesis; chorismate biosynthesis; chorismate from D-erythrose 4-phosphate and phosphoenolpyruvate: step 6/7. Catalyzes the transfer of the enolpyruvyl moiety of phosphoenolpyruvate (PEP) to the 5-hydroxyl of shikimate-3-phosphate (S3P) to produce enolpyruvyl shikimate-3-phosphate and inorganic phosphate. The protein is 3-phosphoshikimate 1-carboxyvinyltransferase of Salinibacter ruber (strain DSM 13855 / M31).